A 405-amino-acid polypeptide reads, in one-letter code: Nodal homolog 2-A (405 aa).

The N-terminal stretch at 1 to 18 (MASLGVILFFVIASLIHG) is a signal peptide. Residues 19–282 (KPIHSERKAA…RVTDTRRPRR (264 aa)) constitute a propeptide that is removed on maturation. 3 N-linked (GlcNAc...) asparagine glycosylation sites follow: Asn-71, Asn-172, and Asn-343. 3 disulfide bridges follow: Cys-305–Cys-371, Cys-334–Cys-402, and Cys-338–Cys-404.

Belongs to the TGF-beta family. Homodimer; disulfide-linked. Forms heterodimers with the TGF-beta family member derriere. Interacts with tsku; enhances nodal2 activity. As to expression, first localized to the vegetal region of the blastula. Just prior to gastrulation (stage 10), this expression disappears and instead becomes localized to the dorsal marginal zone, with enrichment in the organizer.

Its subcellular location is the secreted. In terms of biological role, cooperation and regulatory loops of multiple nodals are essential for mesendoderm patterning in early embryos. Essential for mesoderm formation and axial patterning during embryonic development. Activates the activin-like signaling pathway to induce dorsal and ventral mesoderm in animal cap ectoderm. In addition, also dorsalizes ventral marginal zone (VMZ) tissues during gastrulation. Induces muscle actin. Appears to act as both a short-range and long-range morphogen. The unprocessed protein inhibits bmp- and wnt-signaling. The sequence is that of Nodal homolog 2-A (nodal2-a) from Xenopus laevis (African clawed frog).